A 79-amino-acid chain; its full sequence is Cyclin-dependent kinases regulatory subunit 2 (79 aa).

An N6-acetyllysine modification is found at lysine 4.

This sequence belongs to the CKS family. In terms of assembly, forms a homohexamer that can probably bind six kinase subunits.

In terms of biological role, binds to the catalytic subunit of the cyclin dependent kinases and is essential for their biological function. This chain is Cyclin-dependent kinases regulatory subunit 2 (Cks2), found in Mus musculus (Mouse).